Reading from the N-terminus, the 71-residue chain is Protein bdm (71 aa).

In Escherichia coli (strain K12), this protein is Protein bdm (bdm).